Here is a 118-residue protein sequence, read N- to C-terminus: Large ribosomal subunit protein uL18 (118 aa).

Residues 1 to 20 (MISKPDKNKKRQRRHARVRS) are disordered. Positions 7-20 (KNKKRQRRHARVRS) are enriched in basic residues.

The protein belongs to the universal ribosomal protein uL18 family. Part of the 50S ribosomal subunit; part of the 5S rRNA/L5/L18/L25 subcomplex. Contacts the 5S and 23S rRNAs.

This is one of the proteins that bind and probably mediate the attachment of the 5S RNA into the large ribosomal subunit, where it forms part of the central protuberance. This is Large ribosomal subunit protein uL18 from Pediococcus pentosaceus (strain ATCC 25745 / CCUG 21536 / LMG 10740 / 183-1w).